A 999-amino-acid chain; its full sequence is Probable beta-galactosidase C (999 aa).

A signal peptide spans 1-21 (MFFFRFLTTVLLLFNAKLLVA). An N-linked (GlcNAc...) asparagine glycan is attached at Asn25. Tyr80, Asn125, Glu127, and Asn185 together coordinate substrate. Glu186 serves as the catalytic Proton donor. The N-linked (GlcNAc...) asparagine glycan is linked to Asn195. Tyr249 contacts substrate. Cys255 and Cys302 form a disulfide bridge. Asn274 carries an N-linked (GlcNAc...) asparagine glycan. The Nucleophile role is filled by Glu285. Tyr351 is a substrate binding site. Residues Asn389, Asn441, Asn512, Asn519, Asn600, Asn675, Asn713, Asn757, Asn808, and Asn897 are each glycosylated (N-linked (GlcNAc...) asparagine).

The protein belongs to the glycosyl hydrolase 35 family.

The protein localises to the secreted. It catalyses the reaction Hydrolysis of terminal non-reducing beta-D-galactose residues in beta-D-galactosides.. Functionally, cleaves beta-linked terminal galactosyl residues from gangliosides, glycoproteins, and glycosaminoglycans. The chain is Probable beta-galactosidase C (lacC) from Talaromyces marneffei (strain ATCC 18224 / CBS 334.59 / QM 7333) (Penicillium marneffei).